Consider the following 668-residue polypeptide: tRNA 5-methylaminomethyl-2-thiouridine biosynthesis bifunctional protein MnmC (668 aa).

The interval 1–245 (MKHYAIQPAN…KREMLCGVME (245 aa)) is tRNA (mnm(5)s(2)U34)-methyltransferase. Positions 270-668 (IGGGIASALL…LLKGKAVKAG (399 aa)) are FAD-dependent cmnm(5)s(2)U34 oxidoreductase.

It in the N-terminal section; belongs to the methyltransferase superfamily. tRNA (mnm(5)s(2)U34)-methyltransferase family. This sequence in the C-terminal section; belongs to the DAO family. The cofactor is FAD.

Its subcellular location is the cytoplasm. The catalysed reaction is 5-aminomethyl-2-thiouridine(34) in tRNA + S-adenosyl-L-methionine = 5-methylaminomethyl-2-thiouridine(34) in tRNA + S-adenosyl-L-homocysteine + H(+). In terms of biological role, catalyzes the last two steps in the biosynthesis of 5-methylaminomethyl-2-thiouridine (mnm(5)s(2)U) at the wobble position (U34) in tRNA. Catalyzes the FAD-dependent demodification of cmnm(5)s(2)U34 to nm(5)s(2)U34, followed by the transfer of a methyl group from S-adenosyl-L-methionine to nm(5)s(2)U34, to form mnm(5)s(2)U34. The protein is tRNA 5-methylaminomethyl-2-thiouridine biosynthesis bifunctional protein MnmC of Escherichia coli O139:H28 (strain E24377A / ETEC).